Here is a 98-residue protein sequence, read N- to C-terminus: Citrate lyase acyl carrier protein (98 aa).

Ser14 is modified (O-(phosphoribosyl dephospho-coenzyme A)serine).

It belongs to the CitD family. In terms of assembly, oligomer with a subunit composition of (alpha,beta,gamma)6.

The protein resides in the cytoplasm. Functionally, covalent carrier of the coenzyme of citrate lyase. This is Citrate lyase acyl carrier protein from Shigella boydii serotype 18 (strain CDC 3083-94 / BS512).